A 93-amino-acid polypeptide reads, in one-letter code: Small ribosomal subunit protein uS19 (93 aa).

The protein belongs to the universal ribosomal protein uS19 family.

Protein S19 forms a complex with S13 that binds strongly to the 16S ribosomal RNA. The protein is Small ribosomal subunit protein uS19 of Cutibacterium acnes (strain DSM 16379 / KPA171202) (Propionibacterium acnes).